A 686-amino-acid chain; its full sequence is Soluble guanylate cyclase gcy-34 (686 aa).

His105 serves as a coordination point for heme. Coiled coils occupy residues 306-335 and 398-432; these read KKHM…ELTQ and VEVN…LKDM. The Guanylate cyclase domain maps to 455–583; the sequence is TVMFCDLPAF…ETVTLASQME (129 aa). Mg(2+)-binding residues include Asp460 and Asp504.

The protein belongs to the adenylyl cyclase class-4/guanylyl cyclase family. Heterodimer; with other soluble guanylate cyclases. The cofactor is heme. As to expression, expressed in a small number of neurons, corresponding to URX, AQR and PQR neurons.

It is found in the cytoplasm. The catalysed reaction is GTP = 3',5'-cyclic GMP + diphosphate. Its activity is regulated as follows. May be regulated by molecular oxygen. Probably not activated by nitric oxide (NO). Functionally, synthesizes cyclic GMP (cGMP) from GTP. May be involved in sensitivity to quinine by regulating egl-4 activity through the production of cGMP. This is Soluble guanylate cyclase gcy-34 (gcy-34) from Caenorhabditis elegans.